Here is a 472-residue protein sequence, read N- to C-terminus: Hepatocyte nuclear factor 3-alpha (472 aa).

A DNA-binding region (fork-head) is located at residues 169 to 260; the sequence is AKPPYSYISL…GNMFENGCYL (92 aa). Residues 269–392 form a disordered region; it reads EKQPGAGGGG…ESQLHLKGDP (124 aa). Over residues 273–289 the composition is skewed to gly residues; the sequence is GAGGGGGSGSGGSGAKG. Phosphoserine is present on residues serine 307 and serine 331. Low complexity-rich tracts occupy residues 322–332 and 351–366; these read GAPAPGPAASP and TPASSTAPPISSGPGA.

Binds DNA as a monomer. Interacts with FOXA2. Interacts with NKX2-1. Interacts with HDAC7. Interacts with the histone H3-H4 heterodimer. Associates with nucleosomes containing histone H2A. Interacts with AR. Interacts with NR0B2. As to expression, highly expressed in prostate and ESR1-positive breast tumors. Overexpressed in esophageal and lung adenocarcinomas.

It localises to the nucleus. Functionally, transcription factor that is involved in embryonic development, establishment of tissue-specific gene expression and regulation of gene expression in differentiated tissues. Is thought to act as a 'pioneer' factor opening the compacted chromatin for other proteins through interactions with nucleosomal core histones and thereby replacing linker histones at target enhancer and/or promoter sites. Binds DNA with the consensus sequence 5'-[AC]A[AT]T[AG]TT[GT][AG][CT]T[CT]-3'. Proposed to play a role in translating the epigenetic signatures into cell type-specific enhancer-driven transcriptional programs. Its differential recruitment to chromatin is dependent on distribution of histone H3 methylated at 'Lys-5' (H3K4me2) in estrogen-regulated genes. Involved in the development of multiple endoderm-derived organ systems such as liver, pancreas, lung and prostate; FOXA1 and FOXA2 seem to have at least in part redundant roles. Modulates the transcriptional activity of nuclear hormone receptors. Is involved in ESR1-mediated transcription; required for ESR1 binding to the NKX2-1 promoter in breast cancer cells; binds to the RPRM promoter and is required for the estrogen-induced repression of RPRM. Involved in regulation of apoptosis by inhibiting the expression of BCL2. Involved in cell cycle regulation by activating expression of CDKN1B, alone or in conjunction with BRCA1. Originally described as a transcription activator for a number of liver genes such as AFP, albumin, tyrosine aminotransferase, PEPCK, etc. Interacts with the cis-acting regulatory regions of these genes. Involved in glucose homeostasis. This is Hepatocyte nuclear factor 3-alpha (FOXA1) from Homo sapiens (Human).